Here is a 59-residue protein sequence, read N- to C-terminus: Large ribosomal subunit protein uL30 (59 aa).

This sequence belongs to the universal ribosomal protein uL30 family. In terms of assembly, part of the 50S ribosomal subunit.

This is Large ribosomal subunit protein uL30 from Geobacter metallireducens (strain ATCC 53774 / DSM 7210 / GS-15).